Here is a 462-residue protein sequence, read N- to C-terminus: Myrosinase-binding protein 1 (462 aa).

The interval 1-23 (MSTGGPQKLEAQGGKEGKEWDDG) is disordered. 3 consecutive Jacalin-type lectin domains span residues 6-148 (PQKL…YFAP), 157-300 (PNKV…YFAP), and 310-453 (TKKL…HIVP). Residues 13-23 (GGKEGKEWDDG) show a composition bias toward basic and acidic residues.

The protein belongs to the jacalin lectin family. In terms of tissue distribution, expressed exclusively in flowers, in male and female organs, petals and pedicels. Not detected in pollen grains or sepals.

The sequence is that of Myrosinase-binding protein 1 (MBP1) from Arabidopsis thaliana (Mouse-ear cress).